Consider the following 274-residue polypeptide: Elongation factor Ts (274 aa).

The involved in Mg(2+) ion dislocation from EF-Tu stretch occupies residues 79–82 (TDFV).

Belongs to the EF-Ts family.

Its subcellular location is the cytoplasm. Its function is as follows. Associates with the EF-Tu.GDP complex and induces the exchange of GDP to GTP. It remains bound to the aminoacyl-tRNA.EF-Tu.GTP complex up to the GTP hydrolysis stage on the ribosome. This chain is Elongation factor Ts, found in Aster yellows witches'-broom phytoplasma (strain AYWB).